Here is an 890-residue protein sequence, read N- to C-terminus: Protein translocase subunit SecA (890 aa).

Residues Gln85, 103 to 107 (GEGKT), and Asp491 contribute to the ATP site.

This sequence belongs to the SecA family. Monomer and homodimer. Part of the essential Sec protein translocation apparatus which comprises SecA, SecYEG and auxiliary proteins SecDF. Other proteins may also be involved.

It is found in the cell membrane. The protein localises to the cytoplasm. The catalysed reaction is ATP + H2O + cellular proteinSide 1 = ADP + phosphate + cellular proteinSide 2.. Functionally, part of the Sec protein translocase complex. Interacts with the SecYEG preprotein conducting channel. Has a central role in coupling the hydrolysis of ATP to the transfer of proteins into and across the cell membrane, serving as an ATP-driven molecular motor driving the stepwise translocation of polypeptide chains across the membrane. The sequence is that of Protein translocase subunit SecA from Mycoplasmoides gallisepticum (strain R(low / passage 15 / clone 2)) (Mycoplasma gallisepticum).